The following is a 561-amino-acid chain: uncharacterized protein (561 aa).

2 helical membrane-spanning segments follow: residues 29–49 (FIFNVGSLTPTTAVLGVKKII) and 80–100 (FLFHTVGFFPIYTSSIGASII).

The protein localises to the cell membrane. This is an uncharacterized protein from Mycoplasma genitalium (strain ATCC 33530 / DSM 19775 / NCTC 10195 / G37) (Mycoplasmoides genitalium).